A 248-amino-acid polypeptide reads, in one-letter code: MSYDRAITVFSPDGHLFQVEYAQEAIKKGSTAVGVRGRDIVVLGVEKKSVAKLQDERTVRKICALDDNVCMAFAGLTADARIVINRARVECQSHRLTVEDSVTVEYITRYIASLKQRYTQSNGRRPFGISALIVGFDFDGTPRLYQTDPSGTYHAWKANAIGRGAKSVREFLEKNYTDEAIETDDLTIKLVIKALLEVVQSGGKNIELAVMRRDQPLKILNPEEIEEYVAEIEKEKEENEKKKQKKAS.

Ser130 carries an O-linked (GlcNAc) serine glycan. A Phosphotyrosine modification is found at Tyr153.

Belongs to the peptidase T1A family. The 26S proteasome consists of a 20S proteasome core and two 19S regulatory subunits. The 20S proteasome core is a barrel-shaped complex made of 28 subunits that are arranged in four stacked rings. The two outer rings are each formed by seven alpha subunits, and the two inner rings are formed by seven beta subunits. The proteolytic activity is exerted by three beta-subunits PSMB5, PSMB6 and PSMB7. PSMA7 interacts directly with the PSMG1-PSMG2 heterodimer which promotes 20S proteasome assembly. Interacts with HIF1A. Interacts with RAB7A. Interacts with PRKN. Interacts with ABL1 and ABL2. Interacts with EMAP2. Interacts with MAVS.

The protein localises to the cytoplasm. It localises to the nucleus. Functionally, component of the 20S core proteasome complex involved in the proteolytic degradation of most intracellular proteins. This complex plays numerous essential roles within the cell by associating with different regulatory particles. Associated with two 19S regulatory particles, forms the 26S proteasome and thus participates in the ATP-dependent degradation of ubiquitinated proteins. The 26S proteasome plays a key role in the maintenance of protein homeostasis by removing misfolded or damaged proteins that could impair cellular functions, and by removing proteins whose functions are no longer required. Associated with the PA200 or PA28, the 20S proteasome mediates ubiquitin-independent protein degradation. This type of proteolysis is required in several pathways including spermatogenesis (20S-PA200 complex) or generation of a subset of MHC class I-presented antigenic peptides (20S-PA28 complex). Inhibits the transactivation function of HIF-1A under both normoxic and hypoxia-mimicking conditions. The interaction with EMAP2 increases the proteasome-mediated HIF-1A degradation under the hypoxic conditions. Plays a role in hepatitis C virus internal ribosome entry site-mediated translation. Mediates nuclear translocation of the androgen receptor (AR) and thereby enhances androgen-mediated transactivation. Promotes MAVS degradation and thereby negatively regulates MAVS-mediated innate immune response. The chain is Proteasome subunit alpha type-7 (PSMA7) from Pongo abelii (Sumatran orangutan).